The primary structure comprises 334 residues: L-lactate dehydrogenase B chain (334 aa).

NAD(+) is bound by residues 30–58 (GQVG…MEDR) and Arg-100. Arg-107, Asn-139, and Arg-170 together coordinate substrate. Residue Asn-139 participates in NAD(+) binding. Catalysis depends on His-194, which acts as the Proton acceptor. Position 249 (Thr-249) interacts with substrate.

It belongs to the LDH/MDH superfamily. LDH family. In terms of assembly, homotetramer.

The protein localises to the cytoplasm. It carries out the reaction (S)-lactate + NAD(+) = pyruvate + NADH + H(+). The protein operates within fermentation; pyruvate fermentation to lactate; (S)-lactate from pyruvate: step 1/1. In terms of biological role, interconverts simultaneously and stereospecifically pyruvate and lactate with concomitant interconversion of NADH and NAD(+). The sequence is that of L-lactate dehydrogenase B chain (ldhb) from Fundulus heteroclitus (Killifish).